Here is a 290-residue protein sequence, read N- to C-terminus: Nucleoid occlusion protein (290 aa).

A DNA-binding region (H-T-H motif) is located at residues glutamate 153–leucine 172.

Belongs to the ParB family.

It localises to the cytoplasm. Its subcellular location is the nucleoid. In terms of biological role, effects nucleoid occlusion by binding relatively nonspecifically to DNA and preventing the assembly of the division machinery in the vicinity of the nucleoid, especially under conditions that disturb the cell cycle. It helps to coordinate cell division and chromosome segregation by preventing the formation of the Z ring through the nucleoid, which would cause chromosome breakage. This Bacillus cereus (strain AH187) protein is Nucleoid occlusion protein.